A 100-amino-acid chain; its full sequence is Cysteine-rich venom protein VAR1 (100 aa).

Residues 1–22 form the signal peptide; it reads MILLKLYLTLAAILCQSRGTTS. The region spanning 41–81 is the SCP domain; it reads NKHNDLRRTVDPPAKNMLKMSWDNIIAESAKRAALRCNQNE.

This sequence belongs to the CRISP family. Contains 8 disulfide bonds. As to expression, expressed by the venom gland.

It localises to the secreted. In terms of biological role, blocks ryanodine receptors, and potassium channels. The sequence is that of Cysteine-rich venom protein VAR1 from Varanus acanthurus (Ridge-tailed monitor).